The sequence spans 218 residues: UPF0177 protein YaiF (218 aa).

5 consecutive transmembrane segments (helical) span residues 8–28 (SIIIATAFFLFILSQLPAVFL), 48–68 (FIILTLVVVTICIFIGIKCGF), 81–101 (ILLIFSLLIITFFIQKFVVQF), 123–143 (ILSSLLFPGQFVAVSILAPIL), and 163–183 (FFLSCFFFSYVHSGFSWDILG).

This sequence belongs to the UPF0177 family.

The protein resides in the cell membrane. The protein is UPF0177 protein YaiF (yaiF) of Lactococcus lactis subsp. lactis (strain IL1403) (Streptococcus lactis).